We begin with the raw amino-acid sequence, 413 residues long: Cardiolipin synthase B (413 aa).

2 consecutive PLD phosphodiesterase domains span residues 108-135 (IFRR…SAEH) and 285-312 (RRRP…DPLS). Catalysis depends on residues H113, K115, D120, H290, K292, and D297. Positions 388 to 413 (AQVPPPAQPEMETQDRVDPENTGVKP) are disordered.

It belongs to the phospholipase D family. Cardiolipin synthase subfamily. ClsB sub-subfamily.

It is found in the cell membrane. The enzyme catalyses 2 a 1,2-diacyl-sn-glycero-3-phospho-(1'-sn-glycerol) = a cardiolipin + glycerol. Functionally, catalyzes the phosphatidyl group transfer from one phosphatidylglycerol molecule to another to form cardiolipin (CL) (diphosphatidylglycerol) and glycerol. The protein is Cardiolipin synthase B of Salmonella typhimurium (strain LT2 / SGSC1412 / ATCC 700720).